Here is a 189-residue protein sequence, read N- to C-terminus: Adenylate kinase homolog MTH_1663 (189 aa).

Residue 12–20 (GVPGTGKTT) coordinates ATP.

Belongs to the archaeal adenylate kinase family.

The protein is Adenylate kinase homolog MTH_1663 of Methanothermobacter thermautotrophicus (strain ATCC 29096 / DSM 1053 / JCM 10044 / NBRC 100330 / Delta H) (Methanobacterium thermoautotrophicum).